A 281-amino-acid chain; its full sequence is HTH-type transcriptional activator RamA (281 aa).

Residues 213–278 (RIKQTTKLSA…EAVNAARRIG (66 aa)) enclose the HTH luxR-type domain.

Its function is as follows. RamA is a master regulator of acetate metabolism. It positively controls the expression of acnA, aceA, aceB, ack, pta and ramB genes in the presence of acetate. RamA is also a positive regulator of rpf2 gene expression during growth on glucose as the sole carbon source. The polypeptide is HTH-type transcriptional activator RamA (Corynebacterium glutamicum (strain ATCC 13032 / DSM 20300 / JCM 1318 / BCRC 11384 / CCUG 27702 / LMG 3730 / NBRC 12168 / NCIMB 10025 / NRRL B-2784 / 534)).